The sequence spans 629 residues: DNA mismatch repair protein MutL (629 aa).

It belongs to the DNA mismatch repair MutL/HexB family.

This protein is involved in the repair of mismatches in DNA. It is required for dam-dependent methyl-directed DNA mismatch repair. May act as a 'molecular matchmaker', a protein that promotes the formation of a stable complex between two or more DNA-binding proteins in an ATP-dependent manner without itself being part of a final effector complex. The polypeptide is DNA mismatch repair protein MutL (Rhodospirillum rubrum (strain ATCC 11170 / ATH 1.1.1 / DSM 467 / LMG 4362 / NCIMB 8255 / S1)).